Reading from the N-terminus, the 420-residue chain is Phospholipase A1-II 3 (420 aa).

Positions M1–A21 are cleaved as a signal peptide. N231 is a glycosylation site (N-linked (GlcNAc...) asparagine). S240 (acyl-ester intermediate) is an active-site residue. The active-site Charge relay system is S240. The N-linked (GlcNAc...) asparagine glycan is linked to N294. Residues D305 and H343 each act as charge relay system in the active site. A coiled-coil region spans residues V367 to V388. N403 carries an N-linked (GlcNAc...) asparagine glycan.

It belongs to the AB hydrolase superfamily. Lipase family.

The protein localises to the secreted. Acylhydrolase that catalyzes the hydrolysis of phospholipids at the sn-1 position. The polypeptide is Phospholipase A1-II 3 (Oryza sativa subsp. indica (Rice)).